Consider the following 329-residue polypeptide: UPF0421 protein SH1063 (329 aa).

Helical transmembrane passes span 25-45 (LFCLMLDLTPIFAILTAIVTI), 60-80 (LPATVIGALFAVLFTFIFGDP), 87-107 (FSALFTILVCTKLNLQVGTTV), 108-128 (AVLTSVAMIPGIHDAYLFNFF), and 131-151 (LLTALIGLVTAGLVNFIVLPP).

Belongs to the UPF0421 family.

It localises to the cell membrane. In Staphylococcus haemolyticus (strain JCSC1435), this protein is UPF0421 protein SH1063.